The sequence spans 427 residues: Extracellular superoxide dismutase [Cu-Zn] 2 (427 aa).

The first 20 residues, 1-20, serve as a signal peptide directing secretion; that stretch reads MNKLIISLLIVLSAISIISA. The Extracellular segment spans residues 21-406; that stretch reads DYQYGYCKFG…PTETSQPGTS (386 aa). N-linked (GlcNAc...) asparagine glycans are attached at residues Asn-38, Asn-57, Asn-81, Asn-190, and Asn-218. His-257, His-259, and His-275 together coordinate Cu cation. His-275 and His-283 together coordinate Zn(2+). Asn-288 carries N-linked (GlcNAc...) asparagine glycosylation. Zn(2+) contacts are provided by His-292 and Asp-295. His-331 contributes to the Cu cation binding site. Residue Asn-376 is glycosylated (N-linked (GlcNAc...) asparagine). Residues 381 to 404 are disordered; it reads GESTIEPSPTPSTTPTPTETSQPG. Low complexity predominate over residues 395–404; the sequence is PTPTETSQPG. A helical transmembrane segment spans residues 407 to 426; that stretch reads SYLAPFFVLILSSLISVILI. Residue Leu-427 is a topological domain, cytoplasmic.

It belongs to the Cu-Zn superoxide dismutase family. The cofactor is Cu cation. Zn(2+) is required as a cofactor.

The protein localises to the cell membrane. The enzyme catalyses 2 superoxide + 2 H(+) = H2O2 + O2. In terms of biological role, protect the extracellular space from toxic effect of reactive oxygen intermediates by converting superoxyde radicals into hydrogen peroxyde and oxygen. The chain is Extracellular superoxide dismutase [Cu-Zn] 2 (sodB) from Dictyostelium discoideum (Social amoeba).